Here is a 51-residue protein sequence, read N- to C-terminus: Large ribosomal subunit protein bL33 (51 aa).

Belongs to the bacterial ribosomal protein bL33 family.

This is Large ribosomal subunit protein bL33 from Alkalilimnicola ehrlichii (strain ATCC BAA-1101 / DSM 17681 / MLHE-1).